We begin with the raw amino-acid sequence, 182 residues long: ATP synthase subunit b, chloroplastic (182 aa).

A helical membrane pass occupies residues 33–51; the sequence is VLNIAILLSGVIYLGRNFL.

This sequence belongs to the ATPase B chain family. F-type ATPases have 2 components, F(1) - the catalytic core - and F(0) - the membrane proton channel. F(1) has five subunits: alpha(3), beta(3), gamma(1), delta(1), epsilon(1). F(0) has four main subunits: a(1), b(1), b'(1) and c(10-14). The alpha and beta chains form an alternating ring which encloses part of the gamma chain. F(1) is attached to F(0) by a central stalk formed by the gamma and epsilon chains, while a peripheral stalk is formed by the delta, b and b' chains.

Its subcellular location is the plastid. It localises to the chloroplast thylakoid membrane. In terms of biological role, f(1)F(0) ATP synthase produces ATP from ADP in the presence of a proton or sodium gradient. F-type ATPases consist of two structural domains, F(1) containing the extramembraneous catalytic core and F(0) containing the membrane proton channel, linked together by a central stalk and a peripheral stalk. During catalysis, ATP synthesis in the catalytic domain of F(1) is coupled via a rotary mechanism of the central stalk subunits to proton translocation. Functionally, component of the F(0) channel, it forms part of the peripheral stalk, linking F(1) to F(0). This Guillardia theta (Cryptophyte) protein is ATP synthase subunit b, chloroplastic.